Consider the following 294-residue polypeptide: Acetylglutamate kinase (294 aa).

Residues glycine 64–glycine 65, arginine 86, and asparagine 189 contribute to the substrate site.

Belongs to the acetylglutamate kinase family. ArgB subfamily.

It is found in the cytoplasm. The enzyme catalyses N-acetyl-L-glutamate + ATP = N-acetyl-L-glutamyl 5-phosphate + ADP. It participates in amino-acid biosynthesis; L-arginine biosynthesis; N(2)-acetyl-L-ornithine from L-glutamate: step 2/4. Its function is as follows. Catalyzes the ATP-dependent phosphorylation of N-acetyl-L-glutamate. The chain is Acetylglutamate kinase from Carboxydothermus hydrogenoformans (strain ATCC BAA-161 / DSM 6008 / Z-2901).